A 512-amino-acid chain; its full sequence is Protein maph-9 (512 aa).

Disordered regions lie at residues 24-103 (ISRK…DDDF), 168-386 (DLSE…KNEK), and 481-512 (GNRL…RPFR). Composition is skewed to low complexity over residues 30–39 (TTTTSSGSSG) and 78–95 (STLS…STAA). The span at 178-200 (TDHEDPSLTFRVDKELEQSESKK) shows a compositional bias: basic and acidic residues. Polar residues predominate over residues 230–239 (PQTSANLSTK). Composition is skewed to basic and acidic residues over residues 260 to 302 (KPSD…RENS) and 310 to 386 (VQDH…KNEK). Positions 267 to 429 (KEWLQKKERE…QLEESEKMTR (163 aa)) form a coiled coil. Residues 502–512 (PGTTTSLRPFR) are compositionally biased toward polar residues.

As to expression, expressed in amphid and phasmid ciliated neurons.

The protein resides in the cell projection. The protein localises to the cilium. It is found in the cytoplasm. Its subcellular location is the cytoskeleton. It localises to the cilium axoneme. The chain is Protein maph-9 from Caenorhabditis elegans.